We begin with the raw amino-acid sequence, 532 residues long: CTP synthase (532 aa).

Positions 1 to 267 (MAKFIFVTGG…QDIIIEQLQL (267 aa)) are amidoligase domain. S13 lines the CTP pocket. S13 is a UTP binding site. ATP is bound at residue 14–19 (GLGKGI). Y54 lines the L-glutamine pocket. D71 contributes to the ATP binding site. The Mg(2+) site is built by D71 and E141. CTP-binding positions include 148–150 (DIE), 188–193 (KTKPIQ), and K224. UTP contacts are provided by residues 188-193 (KTKPIQ) and K224. In terms of domain architecture, Glutamine amidotransferase type-1 spans 292–532 (EISFVGKYIE…FIKAIIENNK (241 aa)). L-glutamine is bound at residue G354. C381 (nucleophile; for glutamine hydrolysis) is an active-site residue. L-glutamine-binding positions include 382 to 385 (LGMQ), E405, and R461. Catalysis depends on residues H506 and E508.

This sequence belongs to the CTP synthase family. In terms of assembly, homotetramer.

It carries out the reaction UTP + L-glutamine + ATP + H2O = CTP + L-glutamate + ADP + phosphate + 2 H(+). The catalysed reaction is L-glutamine + H2O = L-glutamate + NH4(+). The enzyme catalyses UTP + NH4(+) + ATP = CTP + ADP + phosphate + 2 H(+). Its pathway is pyrimidine metabolism; CTP biosynthesis via de novo pathway; CTP from UDP: step 2/2. With respect to regulation, allosterically activated by GTP, when glutamine is the substrate; GTP has no effect on the reaction when ammonia is the substrate. The allosteric effector GTP functions by stabilizing the protein conformation that binds the tetrahedral intermediate(s) formed during glutamine hydrolysis. Inhibited by the product CTP, via allosteric rather than competitive inhibition. Catalyzes the ATP-dependent amination of UTP to CTP with either L-glutamine or ammonia as the source of nitrogen. Regulates intracellular CTP levels through interactions with the four ribonucleotide triphosphates. This Mycoplasma capricolum subsp. capricolum (strain California kid / ATCC 27343 / NCTC 10154) protein is CTP synthase.